A 296-amino-acid polypeptide reads, in one-letter code: Cell division protein DivIB (296 aa).

Topologically, residues 1–29 (MTKEIPKINNEYLKEKRKKQRIQQRRVQR) are cytoplasmic. Residues 30-50 (MIVGILVVIVLLILVYMFTPI) traverse the membrane as a helical segment. In terms of domain architecture, POTRA spans 51–119 (SHIKSADIKG…NPIEVNVKEH (69 aa)). Topologically, residues 51–296 (SHIKSADIKG…NKIKDEESSE (246 aa)) are extracellular. A compositionally biased stretch (polar residues) spans 256 to 273 (NNGQTSSASAKEVQSGTA). Positions 256–296 (NNGQTSSASAKEVQSGTASEDKAKDDLQKALNKIKDEESSE) are disordered. Basic and acidic residues predominate over residues 274–296 (SEDKAKDDLQKALNKIKDEESSE).

Belongs to the FtsQ/DivIB family. DivIB subfamily.

The protein resides in the cell membrane. Its function is as follows. Cell division protein that may be involved in stabilizing or promoting the assembly of the division complex. The sequence is that of Cell division protein DivIB from Staphylococcus pseudintermedius (strain HKU10-03).